Reading from the N-terminus, the 546-residue chain is Cyclic GMP-AMP synthase-like receptor (546 aa).

The segment covering 1–10 (MPVGSRQNRV) has biased composition (polar residues). Disordered regions lie at residues 1–116 (MPVG…CASR) and 134–186 (AKQE…RLTN). The span at 35–45 (YTERKERKDVQ) shows a compositional bias: basic and acidic residues. The span at 69–80 (TSRTLRQTSQSR) shows a compositional bias: low complexity. 2 stretches are compositionally biased toward basic and acidic residues: residues 82-95 (EVLE…DCKK) and 145-174 (KEGY…DKAT). Polar residues predominate over residues 175–186 (SHSTKGSFRLTN). Residues Ser243 and 255 to 257 (EFD) each bind ATP. The Mg(2+) site is built by Glu255, Asp257, and Asp374. Residues Asp374 and 428–435 (RTSFSLAE) each bind GTP. ATP contacts are provided by residues 432-435 (SLAE), Lys455, and 470-474 (SYHLK).

This sequence belongs to the mab-21 family. It depends on Mg(2+) as a cofactor. The cofactor is Mn(2+).

The enzyme catalyses GTP + ATP = 2',3'-cGAMP + 2 diphosphate. It carries out the reaction GTP + ATP = pppGp(2'-5')A + diphosphate. It catalyses the reaction pppGp(2'-5')A = 2',3'-cGAMP + diphosphate. In terms of biological role, nucleotidyltransferase that catalyzes the formation of cyclic GMP-AMP (2',3'-cGAMP) from ATP and GTP and plays a key role in innate immunity. Directly binds some unknown ligand, activating the nucleotidyltransferase activity, leading to synthesis of 2',3'-cGAMP, a second messenger that binds to and activates Sting, thereby triggering the immune response via activation of the NF-kappa-B transcription factor. This Exaiptasia diaphana (Tropical sea anemone) protein is Cyclic GMP-AMP synthase-like receptor.